We begin with the raw amino-acid sequence, 326 residues long: Cyclin-dependent kinase 6 (326 aa).

Methionine 1 carries the N-acetylmethionine modification. 2 positions are modified to phosphotyrosine: tyrosine 13 and tyrosine 24. The Protein kinase domain occupies 13–300 (YECVAEIGEG…AYGALNHPYF (288 aa)). ATP contacts are provided by residues 19–27 (IGEGAYGKV) and lysine 43. Phosphothreonine occurs at positions 49 and 70. Residue aspartate 145 is the Proton acceptor of the active site. Threonine 177 carries the phosphothreonine modification. Lysine 264 is subject to N6-acetyllysine. Serine 319 carries the phosphoserine modification. Threonine 325 is modified (phosphothreonine).

Belongs to the protein kinase superfamily. CMGC Ser/Thr protein kinase family. CDC2/CDKX subfamily. Interaction with D-type G1 cyclins. Cyclin binding promotes enzyme activation by phosphorylation at Thr-177. Binds to RUNX1, CDKN2D, FBXO7 and CDKN2C/p18-INK4c. Forms a cytoplasmic complex with Hsp90/HSP90AB1 and CDC37. FBXO7-binding promotes D-type cyclin binding. Thr-177 phosphorylation and Tyr-24 dephosphorylation promotes kinase activity. Expressed in subgranular zone (SGZ) of the hippocampal dentate gyrus (DG) and the subventricular zone (SVZ) of the lateral ventricles whose neural precursor cells (NPC) give rise to dentate granule neurons and olfactory bulb (OB) interneurons, respectively. Expressed in the neuroepithelium of the cerebral cortex of the developing brain.

Its subcellular location is the cytoplasm. It localises to the nucleus. The protein localises to the cell projection. The protein resides in the ruffle. It is found in the cytoskeleton. Its subcellular location is the microtubule organizing center. It localises to the centrosome. It carries out the reaction L-seryl-[protein] + ATP = O-phospho-L-seryl-[protein] + ADP + H(+). The enzyme catalyses L-threonyl-[protein] + ATP = O-phospho-L-threonyl-[protein] + ADP + H(+). With respect to regulation, activated by Thr-177 phosphorylation and Tyr-24 dephosphorylation. Rapidly down-regulated prior to cell differentiation (e.g. erythroid and osteoblast). Serine/threonine-protein kinase involved in the control of the cell cycle and differentiation; promotes G1/S transition. Phosphorylates pRB/RB1 and NPM1. Interacts with D-type G1 cyclins during interphase at G1 to form a pRB/RB1 kinase and controls the entrance into the cell cycle. Involved in initiation and maintenance of cell cycle exit during cell differentiation; prevents cell proliferation and negatively regulates cell differentiation, but is required for the proliferation of specific cell types (e.g. erythroid and hematopoietic cells). Essential for cell proliferation within the dentate gyrus of the hippocampus and the subventricular zone of the lateral ventricles. Required during thymocyte development. Promotes the production of newborn neurons, probably by modulating G1 length. Promotes, at least in astrocytes, changes in patterns of gene expression, changes in the actin cytoskeleton including loss of stress fibers, and enhanced motility during cell differentiation. Prevents myeloid differentiation by interfering with RUNX1 and reducing its transcription transactivation activity, but promotes proliferation of normal myeloid progenitors. Delays senescence. Promotes the proliferation of beta-cells in pancreatic islets of Langerhans. May play a role in the centrosome organization during the cell cycle phases. This chain is Cyclin-dependent kinase 6 (Cdk6), found in Mus musculus (Mouse).